We begin with the raw amino-acid sequence, 201 residues long: Probable nicotinate-nucleotide adenylyltransferase (201 aa).

The disordered stretch occupies residues 182-201; it reads GPESSQSATSIRERGGWSLR. A compositionally biased stretch (basic and acidic residues) spans 192-201; it reads IRERGGWSLR.

Belongs to the NadD family.

It carries out the reaction nicotinate beta-D-ribonucleotide + ATP + H(+) = deamido-NAD(+) + diphosphate. The protein operates within cofactor biosynthesis; NAD(+) biosynthesis; deamido-NAD(+) from nicotinate D-ribonucleotide: step 1/1. Its function is as follows. Catalyzes the reversible adenylation of nicotinate mononucleotide (NaMN) to nicotinic acid adenine dinucleotide (NaAD). The protein is Probable nicotinate-nucleotide adenylyltransferase of Parvibaculum lavamentivorans (strain DS-1 / DSM 13023 / NCIMB 13966).